We begin with the raw amino-acid sequence, 132 residues long: Small ribosomal subunit protein uS11 (132 aa).

Belongs to the universal ribosomal protein uS11 family. In terms of assembly, part of the 30S ribosomal subunit. Interacts with proteins S7 and S18. Binds to IF-3.

Functionally, located on the platform of the 30S subunit, it bridges several disparate RNA helices of the 16S rRNA. Forms part of the Shine-Dalgarno cleft in the 70S ribosome. The polypeptide is Small ribosomal subunit protein uS11 (Lachnoclostridium phytofermentans (strain ATCC 700394 / DSM 18823 / ISDg) (Clostridium phytofermentans)).